The sequence spans 180 residues: Acireductone dioxygenase (180 aa).

Residues His-97, His-99, Glu-103, and His-141 each coordinate Fe(2+). His-97, His-99, Glu-103, and His-141 together coordinate Ni(2+).

It belongs to the acireductone dioxygenase (ARD) family. As to quaternary structure, monomer. Fe(2+) serves as cofactor. Requires Ni(2+) as cofactor.

It catalyses the reaction 1,2-dihydroxy-5-(methylsulfanyl)pent-1-en-3-one + O2 = 3-(methylsulfanyl)propanoate + CO + formate + 2 H(+). The catalysed reaction is 1,2-dihydroxy-5-(methylsulfanyl)pent-1-en-3-one + O2 = 4-methylsulfanyl-2-oxobutanoate + formate + 2 H(+). It functions in the pathway amino-acid biosynthesis; L-methionine biosynthesis via salvage pathway; L-methionine from S-methyl-5-thio-alpha-D-ribose 1-phosphate: step 5/6. Its function is as follows. Catalyzes 2 different reactions between oxygen and the acireductone 1,2-dihydroxy-3-keto-5-methylthiopentene (DHK-MTPene) depending upon the metal bound in the active site. Fe-containing acireductone dioxygenase (Fe-ARD) produces formate and 2-keto-4-methylthiobutyrate (KMTB), the alpha-ketoacid precursor of methionine in the methionine recycle pathway. Ni-containing acireductone dioxygenase (Ni-ARD) produces methylthiopropionate, carbon monoxide and formate, and does not lie on the methionine recycle pathway. This Yersinia pseudotuberculosis serotype O:3 (strain YPIII) protein is Acireductone dioxygenase.